We begin with the raw amino-acid sequence, 62 residues long: Conotoxin Sr5.6 (62 aa).

The first 22 residues, 1-22 (MRCLPVFVILLLLIASASSVDA), serve as a signal peptide directing secretion. Residues 23–44 (QLKTKDDVPLTSVHDNAKGTQH) constitute a propeptide that is removed on maturation. Residue proline 61 is modified to Proline amide.

Belongs to the conotoxin T superfamily. In terms of processing, contains 2 disulfide bonds that can be either 'C1-C3, C2-C4' or 'C1-C4, C2-C3', since these disulfide connectivities have been observed for conotoxins with cysteine framework V (for examples, see AC P0DQQ7 and AC P81755). In terms of tissue distribution, expressed by the venom duct.

The protein localises to the secreted. The protein is Conotoxin Sr5.6 of Conus spurius (Alphabet cone).